A 135-amino-acid chain; its full sequence is D-ribose pyranase (135 aa).

H20 acts as the Proton donor in catalysis. Residues D28, H102, and 124–126 each bind substrate; that span reads YAN.

This sequence belongs to the RbsD / FucU family. RbsD subfamily. In terms of assembly, homodecamer.

Its subcellular location is the cytoplasm. The enzyme catalyses beta-D-ribopyranose = beta-D-ribofuranose. Its pathway is carbohydrate metabolism; D-ribose degradation; D-ribose 5-phosphate from beta-D-ribopyranose: step 1/2. Functionally, catalyzes the interconversion of beta-pyran and beta-furan forms of D-ribose. The sequence is that of D-ribose pyranase from Rhodopirellula baltica (strain DSM 10527 / NCIMB 13988 / SH1).